The sequence spans 444 residues: Methylenetetrahydrofolate--tRNA-(uracil-5-)-methyltransferase TrmFO (444 aa).

Gly-10 to Gly-15 is an FAD binding site.

Belongs to the MnmG family. TrmFO subfamily. Requires FAD as cofactor.

It localises to the cytoplasm. The catalysed reaction is uridine(54) in tRNA + (6R)-5,10-methylene-5,6,7,8-tetrahydrofolate + NADH + H(+) = 5-methyluridine(54) in tRNA + (6S)-5,6,7,8-tetrahydrofolate + NAD(+). It carries out the reaction uridine(54) in tRNA + (6R)-5,10-methylene-5,6,7,8-tetrahydrofolate + NADPH + H(+) = 5-methyluridine(54) in tRNA + (6S)-5,6,7,8-tetrahydrofolate + NADP(+). Functionally, catalyzes the folate-dependent formation of 5-methyl-uridine at position 54 (M-5-U54) in all tRNAs. This chain is Methylenetetrahydrofolate--tRNA-(uracil-5-)-methyltransferase TrmFO, found in Streptococcus gordonii (strain Challis / ATCC 35105 / BCRC 15272 / CH1 / DL1 / V288).